Consider the following 324-residue polypeptide: Olfactory receptor 52I1 (324 aa).

The Extracellular portion of the chain corresponds to 1 to 29; sequence MLGPAYNHTMETPASFLLVGIPGLQSSHL. N-linked (GlcNAc...) asparagine glycosylation occurs at Asn-7. A helical transmembrane segment spans residues 30–50; sequence WLAISLSAMYITALLGNTLIV. Residues 51 to 58 lie on the Cytoplasmic side of the membrane; sequence TAIWMDST. The helical transmembrane segment at 59–79 threads the bilayer; it reads RHEPMYCFLCVLAAVDIVMAS. Residues 80–103 lie on the Extracellular side of the membrane; sequence SVVPKMVSIFCSGDSSISFSACFT. Cysteines 101 and 193 form a disulfide. A helical transmembrane segment spans residues 104–124; sequence QMFFVHLATAVETGLLLTMAF. Residues 125 to 143 lie on the Cytoplasmic side of the membrane; the sequence is DRYVAICKPLHYKRILTPQ. A helical membrane pass occupies residues 144–164; the sequence is VMLGMSMAVTIRAVTFMTPLS. Over 165–200 the chain is Extracellular; the sequence is WMMNHLPFCGSNVVVHSYCKHIALARLACADPVPSS. Residues 201–221 traverse the membrane as a helical segment; that stretch reads LYSLIGSSLMVGSDVAFIAAS. The Cytoplasmic portion of the chain corresponds to 222–241; it reads YILILRAVFDLSSKTAQLKA. A helical membrane pass occupies residues 242–262; that stretch reads LSTCGSHVGVMALYYLPGMAS. At 263-278 the chain is on the extracellular side; sequence IYAAWLGQDIVPLHTQ. The chain crosses the membrane as a helical span at residues 279–299; the sequence is VLLADLYVIIPATLNPIIYGM. Residues 300–324 lie on the Cytoplasmic side of the membrane; that stretch reads RTKQLLEGIWSYLMHFLFDHSNLGS.

It belongs to the G-protein coupled receptor 1 family.

It is found in the cell membrane. Its function is as follows. Odorant receptor. In Homo sapiens (Human), this protein is Olfactory receptor 52I1 (OR52I1).